The sequence spans 190 residues: Elongation factor P-like protein (190 aa).

It belongs to the elongation factor P family.

The chain is Elongation factor P-like protein from Edwardsiella ictaluri (strain 93-146).